A 331-amino-acid polypeptide reads, in one-letter code: Ketol-acid reductoisomerase (NADP(+)) (331 aa).

Residues 2–182 enclose the KARI N-terminal Rossmann domain; it reads AQLFYDSDAD…GGTRAGILET (181 aa). NADP(+) is bound by residues 25–28, Ser51, Ser53, and 83–86; these read YGSQ and DEFQ. The active site involves His108. Position 134 (Gly134) interacts with NADP(+). Residues 183–328 enclose the KARI C-terminal knotted domain; the sequence is NFKEETETDL…KGLRAMFSWL (146 aa). Mg(2+)-binding residues include Asp191, Glu195, Glu227, and Glu231. A substrate-binding site is contributed by Ser252.

The protein belongs to the ketol-acid reductoisomerase family. Mg(2+) is required as a cofactor.

The enzyme catalyses (2R)-2,3-dihydroxy-3-methylbutanoate + NADP(+) = (2S)-2-acetolactate + NADPH + H(+). It carries out the reaction (2R,3R)-2,3-dihydroxy-3-methylpentanoate + NADP(+) = (S)-2-ethyl-2-hydroxy-3-oxobutanoate + NADPH + H(+). It participates in amino-acid biosynthesis; L-isoleucine biosynthesis; L-isoleucine from 2-oxobutanoate: step 2/4. The protein operates within amino-acid biosynthesis; L-valine biosynthesis; L-valine from pyruvate: step 2/4. In terms of biological role, involved in the biosynthesis of branched-chain amino acids (BCAA). Catalyzes an alkyl-migration followed by a ketol-acid reduction of (S)-2-acetolactate (S2AL) to yield (R)-2,3-dihydroxy-isovalerate. In the isomerase reaction, S2AL is rearranged via a Mg-dependent methyl migration to produce 3-hydroxy-3-methyl-2-ketobutyrate (HMKB). In the reductase reaction, this 2-ketoacid undergoes a metal-dependent reduction by NADPH to yield (R)-2,3-dihydroxy-isovalerate. The protein is Ketol-acid reductoisomerase (NADP(+)) of Prochlorococcus marinus (strain MIT 9303).